The primary structure comprises 426 residues: Histidine--tRNA ligase (426 aa).

Belongs to the class-II aminoacyl-tRNA synthetase family. In terms of assembly, homodimer.

The protein localises to the cytoplasm. The enzyme catalyses tRNA(His) + L-histidine + ATP = L-histidyl-tRNA(His) + AMP + diphosphate + H(+). This chain is Histidine--tRNA ligase, found in Legionella pneumophila (strain Lens).